The sequence spans 318 residues: Methionyl-tRNA formyltransferase (318 aa).

(6S)-5,6,7,8-tetrahydrofolate is bound at residue 112-115; that stretch reads SILP.

Belongs to the Fmt family.

The catalysed reaction is L-methionyl-tRNA(fMet) + (6R)-10-formyltetrahydrofolate = N-formyl-L-methionyl-tRNA(fMet) + (6S)-5,6,7,8-tetrahydrofolate + H(+). In terms of biological role, attaches a formyl group to the free amino group of methionyl-tRNA(fMet). The formyl group appears to play a dual role in the initiator identity of N-formylmethionyl-tRNA by promoting its recognition by IF2 and preventing the misappropriation of this tRNA by the elongation apparatus. The polypeptide is Methionyl-tRNA formyltransferase (Haemophilus influenzae (strain PittEE)).